We begin with the raw amino-acid sequence, 334 residues long: Oligopeptide transport ATP-binding protein OppF (334 aa).

The ABC transporter domain occupies 12–265; it reads LEIADLKVHF…PLHPYTKALM (254 aa). 57–64 is a binding site for ATP; sequence GESGCGKS.

This sequence belongs to the ABC transporter superfamily. In terms of assembly, the complex is composed of two ATP-binding proteins (OppD and OppF), two transmembrane proteins (OppB and OppC) and a solute-binding protein (OppA).

The protein localises to the cell inner membrane. The catalysed reaction is a [peptide](out) + ATP + H2O = a [peptide](in) + ADP + phosphate + H(+). The enzyme catalyses L-alanyl-gamma-D-glutamyl-meso-2,6-diaminopimelate(out) + ATP + H2O = L-alanyl-gamma-D-glutamyl-meso-2,6-diaminopimelate(in) + ADP + phosphate + H(+). Its function is as follows. Part of the ABC transporter complex OppABCDF involved in the uptake of oligopeptides, including the cell wall murein tripeptide L-alanyl-gamma-D-glutamyl-meso-diaminopimelate. Probably responsible for energy coupling to the transport system. Plays an important nutritional role and is involved in the recycling of cell wall peptides. This chain is Oligopeptide transport ATP-binding protein OppF, found in Salmonella typhimurium (strain LT2 / SGSC1412 / ATCC 700720).